The sequence spans 376 residues: Carbamoyl phosphate synthase small chain (376 aa).

A CPSase region spans residues 1 to 187 (MRAFLALEDG…AADGAYAWPG (187 aa)). Residues serine 45, glycine 239, and glycine 241 each coordinate L-glutamine. Residues 191-376 (RLVVYDYGIK…RGMVREAVGR (186 aa)) form the Glutamine amidotransferase type-1 domain. The active-site Nucleophile is the cysteine 266. Positions 267, 270, 308, 310, and 311 each coordinate L-glutamine. Active-site residues include histidine 349 and glutamate 351.

It belongs to the CarA family. In terms of assembly, composed of two chains; the small (or glutamine) chain promotes the hydrolysis of glutamine to ammonia, which is used by the large (or ammonia) chain to synthesize carbamoyl phosphate. Tetramer of heterodimers (alpha,beta)4.

It carries out the reaction hydrogencarbonate + L-glutamine + 2 ATP + H2O = carbamoyl phosphate + L-glutamate + 2 ADP + phosphate + 2 H(+). It catalyses the reaction L-glutamine + H2O = L-glutamate + NH4(+). It participates in amino-acid biosynthesis; L-arginine biosynthesis; carbamoyl phosphate from bicarbonate: step 1/1. The protein operates within pyrimidine metabolism; UMP biosynthesis via de novo pathway; (S)-dihydroorotate from bicarbonate: step 1/3. Small subunit of the glutamine-dependent carbamoyl phosphate synthetase (CPSase). CPSase catalyzes the formation of carbamoyl phosphate from the ammonia moiety of glutamine, carbonate, and phosphate donated by ATP, constituting the first step of 2 biosynthetic pathways, one leading to arginine and/or urea and the other to pyrimidine nucleotides. The small subunit (glutamine amidotransferase) binds and cleaves glutamine to supply the large subunit with the substrate ammonia. The sequence is that of Carbamoyl phosphate synthase small chain from Nitratidesulfovibrio vulgaris (strain DSM 19637 / Miyazaki F) (Desulfovibrio vulgaris).